The primary structure comprises 286 residues: uncharacterized protein (286 aa).

One can recognise a Radical SAM core domain in the interval 2 to 221 (VDGMKHLILK…PIYIKNLQKR (220 aa)). Positions 16, 20, and 23 each coordinate [4Fe-4S] cluster.

This sequence belongs to the radical SAM superfamily. Anaerobic sulfatase-maturating enzyme family. Requires [4Fe-4S] cluster as cofactor.

This is an uncharacterized protein from Methanocaldococcus jannaschii (strain ATCC 43067 / DSM 2661 / JAL-1 / JCM 10045 / NBRC 100440) (Methanococcus jannaschii).